We begin with the raw amino-acid sequence, 232 residues long: Ubiquitin-conjugating enzyme E2-24 kDa (232 aa).

The segment covering 1 to 37 (MSSTPAAGSAAEVATSSATSNAPSAPSTTASNVSNTS) has biased composition (low complexity). Residues 1–87 (MSSTPAAGSA…PRISRALGTS (87 aa)) are disordered. Gly residues predominate over residues 58–67 (GASGSNAGGG). In terms of domain architecture, UBC core spans 86-232 (TSAKRIQKEL…ARLWTKRYAT (147 aa)). Cysteine 170 serves as the catalytic Glycyl thioester intermediate.

The protein belongs to the ubiquitin-conjugating enzyme family.

It catalyses the reaction S-ubiquitinyl-[E1 ubiquitin-activating enzyme]-L-cysteine + [E2 ubiquitin-conjugating enzyme]-L-cysteine = [E1 ubiquitin-activating enzyme]-L-cysteine + S-ubiquitinyl-[E2 ubiquitin-conjugating enzyme]-L-cysteine.. Its pathway is protein modification; protein ubiquitination. Catalyzes the covalent attachment of ubiquitin to other proteins. This Drosophila melanogaster (Fruit fly) protein is Ubiquitin-conjugating enzyme E2-24 kDa.